Here is a 1000-residue protein sequence, read N- to C-terminus: MPVIPPEKLVSLQKNQENIRNFTLLAHVDHGKTTLADSLLASNGIISSKLAGTVRFLDFREDEITRGITMKSSAISLFFKVISQNDEKRVEKDYLINLIDSPGHVDFSSEVSSASRLCDGAFVLVDAVEGVCSQTITVLRQAWIDRIKVILVINKMDRLITELKLSPIEAHYHLLRLVEQVNAVIGTFYTGELMQLADNDEVISDEGIYFAPEQGNVVFASAYDGWAFCLDQFSEFYEKKLGLKQKALTKCLWGDYYLDPKTKRVLQPKHLQGRRLKPMFVQFVLENLWAVYESAVSNRNLENIEKIIKALNIKVLPRDIKSKDPRNLLLAIFQQWLPLSTAILLTAIREIPSPINAQANRARKVLSSTPHYEMIDPDITLAMESCDASKEQPVLVYISKMVAFSERDLPNHRRKQLSAEEMKLIRSKLSESIESGINTISIEENVSSTNSDNLEGSTTDMDDDKDILIGFARIYSGTISVGQEVYVYGPKYDPVNPEKHITKVTVESLYLMMGQELVYLETVPAGNVFAIGGLAGTVLRTATLCSSPNGPNLVGVTQQMEPIVRVALEPVRPFEMNKLVTGLDMLNQADPCVQIAVEENGEHVIMCAGEIHLERCLKDLRERFAKIEIQASQPLVPYRETTIATPDLLAKNKELSIGFVTATLPVGGVTIGITVTPLSGSVVDFLLKHSKTIENVSSNFSKKNRNVVVSESLTKSMEEVLTPEKFYERLSKLLEEENSDLGELKNHLDSIIAFGPKRVGPNILFDKTKKMRDFRRQSDETKLIPSDLSEYVVTAFQLITHQGPLCAEPVQGICVSIDQFDISDDSEDSKLLTINNPQIPGQVISVVKESIRHGFLGWSPRLMLAMYSCDVQATSEVLGRVYGVVSKRRGRVIDEEMKEGTPFFIVKALIPVVESFGFAVEILKRTSGAAYPQLIFHGFEMLDENPFWVPTTEEELEDLGELADRENIAKRYMLNVRKRKGLLVEQKIVEKAEKQRTLKH.

The tr-type G domain maps to 17–246 (ENIRNFTLLA…YEKKLGLKQK (230 aa)). Residues 26–33 (AHVDHGKT), 100–104 (DSPGH), and 154–157 (NKMD) contribute to the GTP site.

The protein belongs to the TRAFAC class translation factor GTPase superfamily. Classic translation factor GTPase family.

The protein resides in the cytoplasm. It catalyses the reaction GTP + H2O = GDP + phosphate + H(+). With respect to regulation, GTPase activity is stimulated in the presence of 60S subunits. GTPase involved in the biogenesis of the 60S ribosomal subunit and translational activation of ribosomes. Together with sdo1, may trigger the GTP-dependent release of tif6 from 60S pre-ribosomes in the cytoplasm, thereby activating ribosomes for translation competence by allowing 80S ribosome assembly and facilitating tif6 recycling to the nucleus, where it is required for 60S rRNA processing and nuclear export. Inhibits GTPase activity of ribosome-bound EF-2. The chain is Ribosome assembly protein 1 (ria1) from Schizosaccharomyces pombe (strain 972 / ATCC 24843) (Fission yeast).